The following is a 381-amino-acid chain: Teichoic acid glycerol-phosphate primase (381 aa).

It belongs to the CDP-glycerol glycerophosphotransferase family.

It localises to the cell membrane. The catalysed reaction is N-acetyl-beta-D-mannosaminyl-(1-&gt;4)-N-acetyl-alpha-D-glucosaminyl di-trans,octa-cis-undecaprenyl diphosphate + CDP-glycerol = 4-O-[(2R)-glycerylphospho]-N-acetyl-beta-D-mannosaminyl-(1-&gt;4)-N-acetyl-alpha-D-glucosaminyl di-trans,octa-cis-undecaprenyl diphosphate + CMP + H(+). It functions in the pathway cell wall biogenesis; poly(glycerol phosphate) teichoic acid biosynthesis. In terms of biological role, catalyzes the addition of a single glycerol phosphate residue to the prenoldiphosphate-linked disaccharide, as a primer for polymerisation by TagF. The sequence is that of Teichoic acid glycerol-phosphate primase (tagB) from Bacillus subtilis (strain 168).